Consider the following 380-residue polypeptide: Chaperone protein DnaJ (380 aa).

The J domain occupies 6–71; the sequence is DYYESLEVSR…QKRAAYDRYG (66 aa). The CR-type zinc finger occupies 136 to 215; it reads GVTKDVEVRT…CHGTGTEAKT (80 aa). Residues Cys-149, Cys-152, Cys-167, Cys-170, Cys-189, Cys-192, Cys-203, and Cys-206 each coordinate Zn(2+). CXXCXGXG motif repeat units follow at residues 149 to 156, 167 to 174, 189 to 196, and 203 to 210; these read CEACHGSG, CPTCHGAG, CPTCHGSG, and CKVCHGTG.

Belongs to the DnaJ family. Homodimer. The cofactor is Zn(2+).

The protein localises to the cytoplasm. Participates actively in the response to hyperosmotic and heat shock by preventing the aggregation of stress-denatured proteins and by disaggregating proteins, also in an autonomous, DnaK-independent fashion. Unfolded proteins bind initially to DnaJ; upon interaction with the DnaJ-bound protein, DnaK hydrolyzes its bound ATP, resulting in the formation of a stable complex. GrpE releases ADP from DnaK; ATP binding to DnaK triggers the release of the substrate protein, thus completing the reaction cycle. Several rounds of ATP-dependent interactions between DnaJ, DnaK and GrpE are required for fully efficient folding. Also involved, together with DnaK and GrpE, in the DNA replication of plasmids through activation of initiation proteins. The sequence is that of Chaperone protein DnaJ from Gluconobacter oxydans (strain 621H) (Gluconobacter suboxydans).